Here is a 609-residue protein sequence, read N- to C-terminus: Adagio protein 1 (609 aa).

The segment covering 1 to 17 (MEWDSGSDLSADDASSL) has biased composition (low complexity). The segment at 1–24 (MEWDSGSDLSADDASSLADDEEGG) is disordered. In terms of domain architecture, PAS spans 32 to 114 (IPYPVGNLLH…SEIRKCIDEG (83 aa)). Cys-82 bears the S-4a-FMN cysteine mark. In terms of domain architecture, PAC spans 118 to 161 (QGELLNFRKDGSPLMNRLRLTPIYGDDDTITHIIGIQFFIETDI). One can recognise an F-box domain in the interval 195–241 (CGLFQLSDEVVSMKILSRLTPRDVASVSSVCRRLYVLTKNEDLWRRV). 5 Kelch repeats span residues 292 to 342 (SRCN…SSPP), 345 to 392 (RWGH…SGLA), 397 to 445 (RSWH…PAAW), 450 to 501 (RLGH…TGSG), and 516 to 564 (RLDH…NIPG).

This sequence belongs to the ADAGIO family. In terms of assembly, interacts with NFXL2. Interacts (via N-terminus) with GI and (via Kelch repeats) with ADO3. Component of an E3 ubiquitin ligase SCF(ADO1) complex composed of SKP1A/ASK1 (or SKP1B/ASK2), CUL1, RBX1 and ADO1. Also interacts with SKP1D/ASK4, SKP1K/ASK11, CRY1, PHYB, APRR1 and APRR5, and probably with SKP1N/ASK14 and SKP1S/ASK19. In terms of processing, may be ubiquitinated. Degraded in a proteasome-dependent manner. FMN binds covalently to cysteine after exposure to blue light and is reversed in the dark. As to expression, ubiquitously expressed with higher levels in cotyledons and leaves.

The protein localises to the nucleus. Its subcellular location is the cytoplasm. Its pathway is protein modification; protein ubiquitination. Functionally, component of an E3 ubiquitin ligase complex that plays a central role in blue light-dependent circadian cycles. Acts as a blue light photoreceptor, due to the presence of FMN, that mediates light-regulated protein degradation of critical clock components by targeting them to the proteasome complex. The SCF(ADO1) E3 ubiquitin ligase complex is involved in the regulation of circadian clock-dependent processes including the transition to flowering time, hypocotyl elongation, cotyledons and leaf movement rhythms. APRR1/TOC1 and APRR5, but not 'GIGANTEA', are proteolytic substrates of this ubiquitin ligase complex. Blue light enhances cooperative stabilization of 'GIGANTEA' and ADO1/ZTL, leading to amplification and sharpening of the expression profile of APRR1/TOC1. ADO1/ZTL interacts with ADO3, preventing the interaction of ADO3 with CDF1. This Arabidopsis thaliana (Mouse-ear cress) protein is Adagio protein 1 (ADO1).